A 1536-amino-acid chain; its full sequence is MGMKRLIFLVFLLISFSLFGGYAYFSRYPVLHPDEGLSFVISDLENITLNVWKISEEDFLKAVFDPESFNFSLLEITRPIYSKKFSSEEWKEFSFPLKDRGFYFATLVSNEGTVFRRVIDRSLFIVTDLEAIYFSDSEKLRLHVFDSDGDFVEGAEVLLFEDSKLIDRVFTGKDGVVSITKHFDTFYIRYGDSRFFGGVYFSGGGLEREKLFFVTDRPIYKPSDTVHFRGQIFSFEEGLYKAFEKTKVTVSIFDTKKNEVYRSEFETDELGGFSGSMKLPDTASVGLYKVNVDHGGRRYYEYFLVEEYRKPEYKVEIETDKDVYISGEVVNYLVRVKYFNGQPVAKAQVAYYVRAFPEEGSGYLVYRGTDFTDEEGNLRLGVKTEEGFQGSYRLEVIVTDESQRQIEETRSVKVYADNVLISPLDRYVSTSPGKQVRVKVKVTDLSGNPLNGLLTTSSEDSTSTVAVENGEAIVTFTPKEPKSYRIELSFGKANTHFYVYAYCGAGTSSEFVINPATNTVKPGDELSVQILAPGKVMGVLGIVSNRVYDTIPVSFTGSVNLRVRIPKDIPEKNLFISFVGLDDNGRIYKLERLNVLLDTNFTTMKILFDKDQYEPGEMAQITIESNVDRVCLFLVDEAIYAMVGAEPPVLENFLYPYMNYPRTRGGFPHYWRLYVSRNSFRNKLASLPEEKTFADFKQNALPSKLNVREYFPDTALWIPSLKLHNGTARVSFKVPDSITSFRATAYGFSKDRFSQTESEMVVSKKFYLMPHLPSFLRESDVIKISATVFNRTSKTLPVQLTVELPENIELLEGSSSRHFLMEANSSHTETWTVKAVSASEGSFVKFVAVGEDLNDAVSMRLPVERFAFEREFYRIMLLDGKETLEIPGQFISSRIRFLDSIVPLVEDSLKRLIDFPYGCVEQTMSRFFPAVVAASAGIEVENLEEIIQRGLFKLYSYQHNDGGWGWFRFGESDDFMTCYVMEGLYFTMKAGYDVAESVLQRGIEYLRKHPSAYGSYVLDLYGVNHEPFKPESEADLVFLSLSSKEALKQLMNYVVQDEQKAYLNVYSNNPLISEIQLNSVFLRALAKWKEFPELERKVTNYLLLKKDSAFWTSTKDTSFVILALLEAMPEYASTTLKVINSENTFELKPGEERSLVPGSLTVSGKGIVEVEVVYIEVPKEAVSEGLEIKREFYKRYELLIEENKMIVDAFVPIGRGYVPRSIHPVEKEQTEELYILPYKYWKKTIEYRGVPLEINGAEVKIKGETYTFFRIETFNGLILVFFRNEALIYDTEKNTITRYLDVTDAGFMRSGPVFLMKGFVLVGDEKIPVPEDVTGLSCTMDEILLRGENKTYWYRNGEFVDLPFVARRVFFWDGKKLVAENIRFSGSSKTLRNRVFEVVFDVGDVKIELGDIIKTVVRVKGDGNYLIVEDFIPSCAQVLSNYREKGIEENKFSYSWYSSWNAWYSGREIRTDRVALFARYLYGNSFDYVWRATAEGVFHLLPARVYPMYSRGLYAHTDPDVLFIGADFIDGRDDQP.

Positions 1–23 are cleaved as a signal peptide; that stretch reads MGMKRLIFLVFLLISFSLFGGYA. The segment at residues 919–922 is a cross-link (isoglutamyl cysteine thioester (Cys-Gln)); the sequence is CVEQ.

It belongs to the protease inhibitor I39 (alpha-2-macroglobulin) family. Bacterial alpha-2-macroglobulin subfamily.

Protects the bacterial cell from peptidases. The sequence is that of Alpha-2-macroglobulin from Thermotoga maritima (strain ATCC 43589 / DSM 3109 / JCM 10099 / NBRC 100826 / MSB8).